A 163-amino-acid polypeptide reads, in one-letter code: ATP synthase subunit b 1 (163 aa).

Residues 6 to 26 (LAELWVAVAFLLFVGILIYVG) traverse the membrane as a helical segment.

This sequence belongs to the ATPase B chain family. As to quaternary structure, F-type ATPases have 2 components, F(1) - the catalytic core - and F(0) - the membrane proton channel. F(1) has five subunits: alpha(3), beta(3), gamma(1), delta(1), epsilon(1). F(0) has three main subunits: a(1), b(2) and c(10-14). The alpha and beta chains form an alternating ring which encloses part of the gamma chain. F(1) is attached to F(0) by a central stalk formed by the gamma and epsilon chains, while a peripheral stalk is formed by the delta and b chains.

The protein localises to the cell inner membrane. Its function is as follows. F(1)F(0) ATP synthase produces ATP from ADP in the presence of a proton or sodium gradient. F-type ATPases consist of two structural domains, F(1) containing the extramembraneous catalytic core and F(0) containing the membrane proton channel, linked together by a central stalk and a peripheral stalk. During catalysis, ATP synthesis in the catalytic domain of F(1) is coupled via a rotary mechanism of the central stalk subunits to proton translocation. Component of the F(0) channel, it forms part of the peripheral stalk, linking F(1) to F(0). This chain is ATP synthase subunit b 1, found in Xanthobacter autotrophicus (strain ATCC BAA-1158 / Py2).